The chain runs to 283 residues: Para-Rep C10 (283 aa).

A CRESS-DNA virus Rep endonuclease domain is found at 3–96; the sequence is SIRAIHWCFT…IDGPWEYGTW (94 aa). Residues 10–13 carry the RCR-1 motif; it reads CFTL. A divalent metal cation-binding residues include Glu36 and His42. The RCR-2 motif lies at 42 to 44; sequence HLQ. A Nuclear localization signal motif is present at residues 51–71; that stretch reads KQTTLKKMKELLPGAHLEMAR. Tyr79 acts as the For DNA cleavage activity in catalysis. The RCR-3 signature appears at 79-82; the sequence is YCQK. An a divalent metal cation-binding site is contributed by Glu84. The Nuclear localization signal motif lies at 96-102; that stretch reads WISTGSH. Residue 172–180 coordinates ATP; sequence GPHGGEGKS.

The protein belongs to the nanoviridea/circoviridae replication-associated protein family. Homooligomer (Potential). Rep binds to repeated DNA motifs (iterons). Mg(2+) serves as cofactor. The cofactor is Mn(2+).

It is found in the host nucleus. It carries out the reaction ATP + H2O = ADP + phosphate + H(+). Initiates and terminates the replication only of its own subviral DNA molecule. The closed circular ssDNA genome is first converted to a superhelical dsDNA. Rep binds a specific hairpin at the genome origin of replication. Introduces an endonucleolytic nick within the intergenic region of the genome, thereby initiating the rolling circle replication (RCR). Following cleavage, binds covalently to the 5'-phosphate of DNA as a tyrosyl ester. The cleavage gives rise to a free 3'-OH that serves as a primer for the cellular DNA polymerase. The polymerase synthesizes the (+) strand DNA by rolling circle mechanism. After one round of replication, a Rep-catalyzed nucleotidyl transfer reaction releases a circular single-stranded virus genome, thereby terminating the replication. Displays origin-specific DNA cleavage, nucleotidyl transferase, ATPase and helicase activities. This chain is Para-Rep C10 (C10), found in Milk vetch dwarf C10 alphasatellite (MVDC10A).